The chain runs to 308 residues: Taste receptor type 2 member 46 (308 aa).

A topological domain (extracellular) is located at residue Met1. Residues Ile2–Phe22 form a helical membrane-spanning segment. The Cytoplasmic segment spans residues Ala23–Gln46. Residues Ile47–Tyr67 form a helical membrane-spanning segment. Over Ala68–Asn86 the chain is Extracellular. Residues Val87–Leu107 traverse the membrane as a helical segment. Residues Leu108–Lys126 are Cytoplasmic-facing. A helical membrane pass occupies residues Ser127–Met147. The Extracellular portion of the chain corresponds to Asn148–Thr178. 2 N-linked (GlcNAc...) asparagine glycosylation sites follow: Asn161 and Asn176. Residues Val179–Ile199 form a helical membrane-spanning segment. Residues Cys200–Gln229 lie on the Cytoplasmic side of the membrane. A helical membrane pass occupies residues Thr230–Trp250. Residues Asn251–Pro258 are Extracellular-facing. The chain crosses the membrane as a helical span at residues Val259–Ile279. Over Trp280–Pro308 the chain is Cytoplasmic.

It belongs to the G-protein coupled receptor T2R family.

It localises to the membrane. Its subcellular location is the cell projection. It is found in the cilium membrane. Functionally, receptor that may play a role in the perception of bitterness and is gustducin-linked. May play a role in sensing the chemical composition of the gastrointestinal content. The activity of this receptor may stimulate alpha gustducin, mediate PLC-beta-2 activation and lead to the gating of TRPM5. In airway epithelial cells, binding of bitter compounds increases the intracellular calcium ion concentration and stimulates ciliary beat frequency. The protein is Taste receptor type 2 member 46 (TAS2R46) of Macaca mulatta (Rhesus macaque).